The primary structure comprises 375 residues: Succinyl-diaminopimelate desuccinylase (375 aa).

Residue histidine 66 participates in Zn(2+) binding. The active site involves aspartate 68. Residue aspartate 99 coordinates Zn(2+). Catalysis depends on glutamate 133, which acts as the Proton acceptor. 3 residues coordinate Zn(2+): glutamate 134, glutamate 162, and histidine 348.

The protein belongs to the peptidase M20A family. DapE subfamily. Homodimer. Zn(2+) is required as a cofactor. Requires Co(2+) as cofactor.

It carries out the reaction N-succinyl-(2S,6S)-2,6-diaminopimelate + H2O = (2S,6S)-2,6-diaminopimelate + succinate. It functions in the pathway amino-acid biosynthesis; L-lysine biosynthesis via DAP pathway; LL-2,6-diaminopimelate from (S)-tetrahydrodipicolinate (succinylase route): step 3/3. Functionally, catalyzes the hydrolysis of N-succinyl-L,L-diaminopimelic acid (SDAP), forming succinate and LL-2,6-diaminopimelate (DAP), an intermediate involved in the bacterial biosynthesis of lysine and meso-diaminopimelic acid, an essential component of bacterial cell walls. The sequence is that of Succinyl-diaminopimelate desuccinylase from Erwinia tasmaniensis (strain DSM 17950 / CFBP 7177 / CIP 109463 / NCPPB 4357 / Et1/99).